Consider the following 235-residue polypeptide: Uridylate kinase (235 aa).

8-11 serves as a coordination point for ATP; that stretch reads KLSG. Gly49 contacts UMP. Gly50 and Arg54 together coordinate ATP. Residue 131–138 participates in UMP binding; the sequence is TGNPYFST. The ATP site is built by Asn159, Tyr165, and Asp168.

It belongs to the UMP kinase family. As to quaternary structure, homohexamer.

Its subcellular location is the cytoplasm. The enzyme catalyses UMP + ATP = UDP + ADP. Its pathway is pyrimidine metabolism; CTP biosynthesis via de novo pathway; UDP from UMP (UMPK route): step 1/1. Its activity is regulated as follows. Inhibited by UTP. Catalyzes the reversible phosphorylation of UMP to UDP. The protein is Uridylate kinase of Mycoplasma pneumoniae (strain ATCC 29342 / M129 / Subtype 1) (Mycoplasmoides pneumoniae).